The primary structure comprises 249 residues: UPF0524 protein C3orf70 homolog B (249 aa).

The interval 174-230 (GPKMGHCSSPSTSEDSGINALGGHFLESCEEESEEEDELSTDGHSSPGSLWDQDECT) is disordered. Acidic residues predominate over residues 201–213 (SCEEESEEEDELS).

It belongs to the UPF0524 family.

In terms of biological role, plays a role in neuronal and neurobehavioral development. Required for normal expression of the postmitotic and mature neuron markers elavl3 and eno2 and neurobehaviors related to circadian rhythm and altered light-dark conditions. The protein is UPF0524 protein C3orf70 homolog B of Danio rerio (Zebrafish).